The sequence spans 192 residues: Fe/S biogenesis protein NfuA (192 aa).

[4Fe-4S] cluster-binding residues include cysteine 149 and cysteine 152.

The protein belongs to the NfuA family. As to quaternary structure, homodimer. [4Fe-4S] cluster is required as a cofactor.

Its function is as follows. Involved in iron-sulfur cluster biogenesis. Binds a 4Fe-4S cluster, can transfer this cluster to apoproteins, and thereby intervenes in the maturation of Fe/S proteins. Could also act as a scaffold/chaperone for damaged Fe/S proteins. The sequence is that of Fe/S biogenesis protein NfuA from Shewanella denitrificans (strain OS217 / ATCC BAA-1090 / DSM 15013).